Reading from the N-terminus, the 285-residue chain is Non-structural protein 3c (285 aa).

This Bat coronavirus 133/2005 (BtCoV) protein is Non-structural protein 3c.